The sequence spans 88 residues: UPF0367 protein AM1_1885 (88 aa).

This sequence belongs to the UPF0367 family.

This is UPF0367 protein AM1_1885 from Acaryochloris marina (strain MBIC 11017).